The chain runs to 338 residues: MNTRPFYFGLIFIAIIAILANYLGNTDFSHHYHISALIIAILLGMAIGNTIYPQFSTQVEKGVLFAKGALLRTGIVLYGFRLTFGDIADVGLNAVVTDAIMLISTFFFTVLLGIRYLKMDKQLVYLTGAGCSICGAAAVMAAESVTKAESHKVSVAIAIVVIFGTLAIFTYPLFYTWSQDLINAHQFGIYVGSSVHEVAQVYAIGENIDPIVANTAVISKMIRVMMLAPFLLMLSWLLTRSDGVSENTSHKITIPWFAVLFIGVAIFNSFDLLPKELVKLFVEIDSFLLISSMAALGLTTHASAIKKAGLKPFVLGILTYLWLVVGGFLVNYGISKLI.

10 helical membrane passes run 5 to 23 (PFYF…ANYL), 33 to 55 (HISA…YPQF), 62 to 84 (GVLF…RLTF), 94 to 116 (AVVT…GIRY), 123 to 145 (LVYL…AESV), 155 to 177 (VAIA…FYTW), 222 to 239 (IRVM…WLLT), 254 to 273 (IPWF…FDLL), 280 to 302 (LFVE…TTHA), and 312 to 334 (PFVL…NYGI).

Belongs to the UPF0324 family.

The protein resides in the cell membrane. In Neisseria meningitidis serogroup A / serotype 4A (strain DSM 15465 / Z2491), this protein is UPF0324 membrane protein NMA0465.